We begin with the raw amino-acid sequence, 88 residues long: Small ribosomal subunit protein bS16 (88 aa).

This sequence belongs to the bacterial ribosomal protein bS16 family.

The sequence is that of Small ribosomal subunit protein bS16 from Halothermothrix orenii (strain H 168 / OCM 544 / DSM 9562).